The following is a 159-amino-acid chain: 2-C-methyl-D-erythritol 2,4-cyclodiphosphate synthase (159 aa).

A divalent metal cation-binding residues include Asp10 and His12. 4-CDP-2-C-methyl-D-erythritol 2-phosphate is bound by residues 10 to 12 (DVH) and 36 to 37 (HS). His44 provides a ligand contact to a divalent metal cation. Residues 58 to 60 (DIG), 63 to 67 (FPDTD), 102 to 108 (AQAPKMA), 134 to 137 (TTTE), Phe141, and Arg144 contribute to the 4-CDP-2-C-methyl-D-erythritol 2-phosphate site.

Belongs to the IspF family. In terms of assembly, homotrimer. Requires a divalent metal cation as cofactor.

It catalyses the reaction 4-CDP-2-C-methyl-D-erythritol 2-phosphate = 2-C-methyl-D-erythritol 2,4-cyclic diphosphate + CMP. Its pathway is isoprenoid biosynthesis; isopentenyl diphosphate biosynthesis via DXP pathway; isopentenyl diphosphate from 1-deoxy-D-xylulose 5-phosphate: step 4/6. Functionally, involved in the biosynthesis of isopentenyl diphosphate (IPP) and dimethylallyl diphosphate (DMAPP), two major building blocks of isoprenoid compounds. Catalyzes the conversion of 4-diphosphocytidyl-2-C-methyl-D-erythritol 2-phosphate (CDP-ME2P) to 2-C-methyl-D-erythritol 2,4-cyclodiphosphate (ME-CPP) with a corresponding release of cytidine 5-monophosphate (CMP). The sequence is that of 2-C-methyl-D-erythritol 2,4-cyclodiphosphate synthase from Shewanella frigidimarina (strain NCIMB 400).